An 80-amino-acid polypeptide reads, in one-letter code: Cell division topological specificity factor (80 aa).

This sequence belongs to the MinE family.

Functionally, prevents the cell division inhibition by proteins MinC and MinD at internal division sites while permitting inhibition at polar sites. This ensures cell division at the proper site by restricting the formation of a division septum at the midpoint of the long axis of the cell. In Wolinella succinogenes (strain ATCC 29543 / DSM 1740 / CCUG 13145 / JCM 31913 / LMG 7466 / NCTC 11488 / FDC 602W) (Vibrio succinogenes), this protein is Cell division topological specificity factor.